We begin with the raw amino-acid sequence, 67 residues long: Conotoxin TsMMSK-011 (67 aa).

The signal sequence occupies residues 1–20 (MMSKLGVLLTICLLLFPLTA). The propeptide occupies 21 to 50 (VQLDGDQPADLPALRTQDISTDHSPWFDPV). 3 disulfide bridges follow: Cys53–Cys65, Cys54–Cys61, and Cys58–Cys64. Pro63 carries the post-translational modification 4-hydroxyproline.

Belongs to the conotoxin M superfamily. In terms of tissue distribution, expressed by the venom duct.

Its subcellular location is the secreted. This Conus tessulatus (Tessellate cone) protein is Conotoxin TsMMSK-011.